The primary structure comprises 127 residues: Apolipoprotein C-IV (127 aa).

An N-terminal signal peptide occupies residues 1 to 27 (MSLLRNRLQALPALCLCVLVLACIGAC). An N-linked (GlcNAc...) asparagine glycan is attached at Asn-63.

Belongs to the apolipoprotein C4 family. Expressed by the liver and secreted in plasma.

It is found in the secreted. Functionally, may participate in lipoprotein metabolism. This Homo sapiens (Human) protein is Apolipoprotein C-IV (APOC4).